Here is a 285-residue protein sequence, read N- to C-terminus: 4-diphosphocytidyl-2-C-methyl-D-erythritol kinase (285 aa).

Residue K28 is part of the active site. Residue 109-119 (PVAAGLGGGSA) coordinates ATP. D148 is a catalytic residue.

It belongs to the GHMP kinase family. IspE subfamily.

It carries out the reaction 4-CDP-2-C-methyl-D-erythritol + ATP = 4-CDP-2-C-methyl-D-erythritol 2-phosphate + ADP + H(+). It functions in the pathway isoprenoid biosynthesis; isopentenyl diphosphate biosynthesis via DXP pathway; isopentenyl diphosphate from 1-deoxy-D-xylulose 5-phosphate: step 3/6. Its function is as follows. Catalyzes the phosphorylation of the position 2 hydroxy group of 4-diphosphocytidyl-2C-methyl-D-erythritol. The polypeptide is 4-diphosphocytidyl-2-C-methyl-D-erythritol kinase (Novosphingobium aromaticivorans (strain ATCC 700278 / DSM 12444 / CCUG 56034 / CIP 105152 / NBRC 16084 / F199)).